The primary structure comprises 360 residues: AA9 family lytic polysaccharide monooxygenase A (360 aa).

The signal sequence occupies residues 1-19; the sequence is MKTSFGLLALAAAAKLVNA. Cu(2+) is bound by residues H20 and H102. C62 and C183 are oxidised to a cystine. H169 contacts O2. Y180 serves as a coordination point for Cu(2+). A disordered region spans residues 254–293; it reads TSAASASSTKAPATTAAPVQTESAKPATSTTQAAAPTTLV. Positions 322–358 constitute a CBM1 domain; sequence GVVKMYAQCGGMNYSGSTTCESGLTCKQWNPYYHQCV. An N-linked (GlcNAc...) asparagine glycan is attached at N334.

It belongs to the polysaccharide monooxygenase AA9 family. Cu(2+) serves as cofactor.

The protein localises to the secreted. The catalysed reaction is [(1-&gt;4)-beta-D-glucosyl]n+m + reduced acceptor + O2 = 4-dehydro-beta-D-glucosyl-[(1-&gt;4)-beta-D-glucosyl]n-1 + [(1-&gt;4)-beta-D-glucosyl]m + acceptor + H2O.. Its function is as follows. Lytic polysaccharide monooxygenase (LPMO) that depolymerizes crystalline and amorphous polysaccharides via the oxidation of scissile alpha- or beta-(1-4)-glycosidic bonds, yielding C4 oxidation products. Catalysis by LPMOs requires the reduction of the active-site copper from Cu(II) to Cu(I) by a reducing agent and H(2)O(2) or O(2) as a cosubstrate. This Aspergillus terreus (strain NIH 2624 / FGSC A1156) protein is AA9 family lytic polysaccharide monooxygenase A (eglD).